We begin with the raw amino-acid sequence, 732 residues long: TIR domain-containing adapter molecule 1 (732 aa).

The TRIF-NTD stretch occupies residues 1–153; sequence MDNPGPSLRG…CSSDIKGDPS (153 aa). Residues 84-91 carry the TRAF6-binding motif; that stretch reads EGPEEPPD. A disordered region spans residues 144–191; sequence CSSDIKGDPSGFQPLHSHQGSLQPPSASPAVTRSQPRPIDTPDWSWGH. The span at 159–178 shows a compositional bias: polar residues; sequence HSHQGSLQPPSASPAVTRSQ. The short motif at 206–209 is the pLxIS motif element; the sequence is LEIS. S209 is subject to Phosphoserine. Residue K228 forms a Glycyl lysine isopeptide (Lys-Gly) (interchain with G-Cter in ubiquitin) linkage. 2 consecutive short sequence motifs (TRAF6-binding) follow at residues 247–254 and 296–306; these read QEPEEISW and HCPIECTELST. Residues 305–331 show a composition bias toward polar residues; the sequence is STNSRSPLTSTTESVGKQWPITSQRSP. The segment at 305–389 is disordered; it reads STNSRSPLTS…TSTSPVLDHS (85 aa). Low complexity predominate over residues 345-359; that stretch reads SSSPPAQPPSLQASP. The region spanning 395–534 is the TIR domain; sequence KFYNFVVIHA…KVANTFKTQK (140 aa). The interval 514 to 713 is sufficient to induce apoptosis; it reads WLDEHSPIFA…SSDDKTECSE (200 aa). Disordered regions lie at residues 603–679 and 696–732; these read TPSW…GPQP and MWGH…ETPE. 2 stretches are compositionally biased toward pro residues: residues 604 to 615 and 625 to 657; these read PSWPGCPQPIPS and PYSP…PPVS. Residues 658–671 show a composition bias toward low complexity; sequence SPQSQSFPSASSPA.

In terms of assembly, homodimer. Found in a multi-helicase-TICAM1 complex at least composed of DHX36, DDX1, DDX21 and TICAM1; this complex exists in resting cells with or without poly(I:C) RNA ligand stimulation. Interacts (via TIR domain) with DDX21 (via C-terminus). Interacts (via TIR domain) with DHX36 (via C-terminus). Interacts with AZI2 and IRF7. Interacts (when phosphorylated) with IRF3; following activation and phosphorylation on the pLxIS motif by TBK1, recruits IRF3. Interacts with TICAM2 in TLR4 recruitment. Interaction with PIAS4 inhibits the TICAM1-induced NF-kappa-B, IRF and IFNB1 activation. Interacts with IKBKB and IKBKE. Interaction with SARM1 blocks TICAM1-dependent transcription factor activation. Interacts with TRAF3. Interacts with TRAFD1. Interacts with UBQLN1 (via UBA domain). Interacts with TBK1, TRAF6 and RIPK1 and these interactions are enhanced in the presence of WDFY1. Interacts (via the TIR domain) with TLR3 in response to poly(I:C) and this interaction is enhanced in the presence of WDFY1. Interacts with TLR4 in response to poly(I:C) in a WDFY1-dependent manner. Interacts with WDFY1 in response to poly(I:C). Interacts with TRIM56. Interacts (via the TIR domain) with TLR5. Interacts with TRIM8. Interacts with TAX1BP1 and TRIM32; these interactions target TICAM1 to TAX1BP1-mediated selective autophagic degradation. Interacts with DDX50. Phosphorylated by TBK1. Following activation, phosphorylated by TBK1 at Ser-209 in the pLxIS motif. The phosphorylated pLxIS motif constitutes an IRF3-binding motif, leading to recruitment of the transcription factor IRF3 to induce type-I interferons and other cytokines. In terms of processing, polyubiquitinated at Lys-228 by TRIM38 with 'Lys-48'-linked chains, leading to proteasomal degradation. Polyubiquitinated with 'Lys-6'- and 'Lys-33'-linked chains in a TRIM8-dependent manner; ubiquitination disrupts the interaction with TBK1 and subsequent interferon production.

The protein localises to the cytoplasm. It is found in the cytosol. It localises to the cytoplasmic vesicle. Its subcellular location is the autophagosome. The protein resides in the mitochondrion. Functionally, involved in innate immunity against invading pathogens. Adapter used by TLR3, TLR4 (through TICAM2) and TLR5 to mediate NF-kappa-B and interferon-regulatory factor (IRF) activation, and to induce apoptosis. Ligand binding to these receptors results in TRIF recruitment through its TIR domain. Distinct protein-interaction motifs allow recruitment of the effector proteins TBK1, TRAF6 and RIPK1, which in turn, lead to the activation of transcription factors IRF3 and IRF7, NF-kappa-B and FADD respectively. Phosphorylation by TBK1 on the pLxIS motif leads to recruitment and subsequent activation of the transcription factor IRF3 to induce expression of type I interferon and exert a potent immunity against invading pathogens. Component of a multi-helicase-TICAM1 complex that acts as a cytoplasmic sensor of viral double-stranded RNA (dsRNA) and plays a role in the activation of a cascade of antiviral responses including the induction of pro-inflammatory cytokines. The sequence is that of TIR domain-containing adapter molecule 1 (Ticam1) from Mus musculus (Mouse).